The following is a 180-amino-acid chain: GTP cyclohydrolase 1 (180 aa).

3 residues coordinate Zn(2+): cysteine 71, histidine 74, and cysteine 142.

It belongs to the GTP cyclohydrolase I family. As to quaternary structure, homomer.

The enzyme catalyses GTP + H2O = 7,8-dihydroneopterin 3'-triphosphate + formate + H(+). It participates in cofactor biosynthesis; 7,8-dihydroneopterin triphosphate biosynthesis; 7,8-dihydroneopterin triphosphate from GTP: step 1/1. The sequence is that of GTP cyclohydrolase 1 from Helicobacter pylori (strain G27).